Here is a 580-residue protein sequence, read N- to C-terminus: Protein O-linked-mannose beta-1,4-N-acetylglucosaminyltransferase 2 (580 aa).

Topologically, residues 1-4 (MHLS) are cytoplasmic. A helical; Signal-anchor for type II membrane protein transmembrane segment spans residues 5 to 25 (AVFNALLVSVLAAVLWKHVRL). Residues 26 to 580 (REHAATLEEE…PFADVLVCNT (555 aa)) lie on the Lumenal side of the membrane. Asparagine 99 and asparagine 276 each carry an N-linked (GlcNAc...) asparagine glycan. The region spanning 488-580 (ARCQASVHGA…PFADVLVCNT (93 aa)) is the Fibronectin type-III domain.

This sequence belongs to the glycosyltransferase 61 family. As to expression, highly expressed in the brain, muscle, heart, and kidney in both fetus and adult. In the brain, highest expression in the cortex and cerebellum. Highly expressed in the pancreas.

The protein localises to the endoplasmic reticulum membrane. It catalyses the reaction 3-O-(alpha-D-mannosyl)-L-threonyl-[protein] + UDP-N-acetyl-alpha-D-glucosamine = 3-O-(N-acetyl-beta-D-glucosaminyl-(1-&gt;4)-alpha-D-mannosyl)-L-threonyl-[protein] + UDP + H(+). The protein operates within protein modification; protein glycosylation. In terms of biological role, O-linked mannose beta-1,4-N-acetylglucosaminyltransferase that transfers UDP-N-acetyl-D-glucosamine to the 4-position of the mannose to generate N-acetyl-D-glucosamine-beta-1,4-O-D-mannosylprotein. Involved in the biosynthesis of the phosphorylated O-mannosyl trisaccharide (N-acetylgalactosamine-beta-3-N-acetylglucosamine-beta-4-(phosphate-6-)mannose), a carbohydrate structure present in alpha-dystroglycan (DAG1), which is required for binding laminin G-like domain-containing extracellular proteins with high affinity. This chain is Protein O-linked-mannose beta-1,4-N-acetylglucosaminyltransferase 2 (POMGNT2), found in Homo sapiens (Human).